The primary structure comprises 84 residues: uncharacterized protein (84 aa).

Residues 8–47 form a cysteine motif region; that stretch reads CECCDRDLPPDSGDAMICTFECTFCAGCAETKLGGTCPNC.

This is an uncharacterized protein from Rhizobium meliloti (strain 1021) (Ensifer meliloti).